The chain runs to 115 residues: Mediator of RNA polymerase II transcription subunit 11 (115 aa).

Residues 56-107 (YERLDKSTTQLRKEIQLLDENVGTRLLPINVNKKALGQDTEKMEEQLDLLSA) adopt a coiled-coil conformation.

It belongs to the mediator complex subunit 11 family. Component of the Mediator complex, which is composed of at least 21 subunits that form three structurally distinct submodules. The Mediator head module contains MED6, MED8, MED11, SRB4/MED17, SRB5/MED18, ROX3/MED19, SRB2/MED20 and SRB6/MED22, the middle module contains MED1, MED4, NUT1/MED5, MED7, CSE2/MED9, NUT2/MED10, SRB7/MED21 and SOH1/MED31, and the tail module contains MED2, PGD1/MED3, RGR1/MED14, GAL11/MED15 and SIN4/MED16. The head and the middle modules interact directly with RNA polymerase II, whereas the elongated tail module interacts with gene-specific regulatory proteins. MED11 forms a heterodimer with SRB6/MED22. The MED11/22 heterodimer binds to and stabilizes the central head subunit SRB4/MED17. Interacts with TFIIH subunit RAD3.

The protein localises to the nucleus. In terms of biological role, component of the Mediator complex, a coactivator involved in the regulated transcription of nearly all RNA polymerase II-dependent genes. Mediator functions as a bridge to convey information from gene-specific regulatory proteins to the basal RNA polymerase II transcription machinery. The Mediator complex, having a compact conformation in its free form, is recruited to promoters by direct interactions with regulatory proteins and serves for the assembly of a functional pre-initiation complex (PIC) with RNA polymerase II and the general transcription factors. The Mediator complex unfolds to an extended conformation and partially surrounds RNA polymerase II, specifically interacting with the unphosphorylated form of the C-terminal domain (CTD) of RNA polymerase II. The Mediator complex dissociates from the RNA polymerase II holoenzyme and stays at the promoter when transcriptional elongation begins. The essential MED11/22 heterodimer specifically functions in promoting stable PIC formation. The chain is Mediator of RNA polymerase II transcription subunit 11 (MED11) from Saccharomyces cerevisiae (strain ATCC 204508 / S288c) (Baker's yeast).